A 164-amino-acid polypeptide reads, in one-letter code: MSVNTDELRHQVMINQFVLAAGCAADQAQQLLQAAHWQFETALSTFFQESNIPNSHHHPQMMCTPSNTPATPPNFPDALAMFSKLRTSEGLQSSSSSPMAAVACSPPANFSPFWAASPPNHQVPWIPPSSPNTFHLHCPQPTWPPGASQGGAPQKAMAAMDGQR.

S2 is modified (N-acetylserine). The disordered stretch occupies residues 144–164; that stretch reads PPGASQGGAPQKAMAAMDGQR.

Belongs to the UBALD family.

The chain is UBA-like domain-containing protein 2 (Ubald2) from Mus musculus (Mouse).